The primary structure comprises 118 residues: uncharacterized protein (118 aa).

Residues Met1–Gly12 are compositionally biased toward polar residues. The disordered stretch occupies residues Met1–Lys63. The span at Thr39–Lys63 shows a compositional bias: basic residues. A helical transmembrane segment spans residues Phe81–Ile101.

The protein resides in the membrane. This is an uncharacterized protein from Caenorhabditis elegans.